Here is a 109-residue protein sequence, read N- to C-terminus: Aquaporin-2 (109 aa).

Over 1-6 (SIAFSR) the chain is Cytoplasmic. The helical transmembrane segment at 7–27 (AVFSEFLATLLFVFFGLGSAL) threads the bilayer. Over 28 to 35 (NWPQALPS) the chain is Extracellular. The helical transmembrane segment at 36–54 (VLQIAMAFGLAIGTLVQTL) threads the bilayer. The Cytoplasmic segment spans residues 55-59 (GHISG). The segment at residues 60-69 (AHINPAVTVA) is an intramembrane region (discontinuously helical). The NPA 1 motif lies at 63–65 (NPA). Residues 70-80 (CLVGCHVSFLR) lie on the Cytoplasmic side of the membrane. A helical transmembrane segment spans residues 81-102 (ATFYVAAQLLGAVAGAALLHEL). Residues 103–109 (TPPDIRG) are Extracellular-facing.

This sequence belongs to the MIP/aquaporin (TC 1.A.8) family. In terms of assembly, homotetramer. Serine phosphorylation is necessary and sufficient for expression at the apical membrane. Endocytosis is not phosphorylation-dependent. In terms of processing, N-glycosylated.

Its subcellular location is the apical cell membrane. It is found in the basolateral cell membrane. The protein localises to the cell membrane. The protein resides in the cytoplasmic vesicle membrane. It localises to the golgi apparatus. Its subcellular location is the trans-Golgi network membrane. It carries out the reaction H2O(in) = H2O(out). It catalyses the reaction glycerol(in) = glycerol(out). Forms a water-specific channel that provides the plasma membranes of renal collecting duct with high permeability to water, thereby permitting water to move in the direction of an osmotic gradient. Plays an essential role in renal water homeostasis. Could also be permeable to glycerol. The protein is Aquaporin-2 of Amblysomus hottentotus (Hottentot golden mole).